A 406-amino-acid polypeptide reads, in one-letter code: Fosmidomycin resistance protein (406 aa).

Residues 1 to 42 (MAMSEQPQPVAGAAASTTKARTSFGILGAISLSHLLNDMIQS) lie on the Periplasmic side of the membrane. Transmembrane regions (helical) follow at residues 43-63 (LILA…MQIG) and 64-84 (MITL…GYWT). Over 85-102 (DKYPMPWSLPIGMCFTLS) the chain is Periplasmic. Residues 103–123 (GLVLLALAGSFGAVLLAAALV) traverse the membrane as a helical segment. The Cytoplasmic segment spans residues 124–151 (GTGSSVFHPESSRVARMASGGRHGLAQS). The helical transmembrane segment at 152 to 172 (IFQVGGNFGSSLGPLLAAVII) threads the bilayer. Residues 173 to 177 (APYGK) are Periplasmic-facing. Residues 178 to 198 (GNVAWFVLAALLAIVVLAQIS) traverse the membrane as a helical segment. The Cytoplasmic segment spans residues 199–225 (RWYSAQHRMNKGKPKATIINPLPRNKV). A helical membrane pass occupies residues 226 to 246 (VLAVSILLILIFSKYFYMASI). The Periplasmic segment spans residues 247–266 (SSYYTFYLMQKFGLSIQNAQ). The chain crosses the membrane as a helical span at residues 267-287 (LHLFAFLFAVAAGTVIGGPVG). Topologically, residues 288–294 (DKIGRKY) are cytoplasmic. A helical transmembrane segment spans residues 295–315 (VIWGSILGVAPFTLILPYASL). The Periplasmic portion of the chain corresponds to 316 to 319 (HWTG). A helical membrane pass occupies residues 320 to 340 (VLTVIIGFILASAFSAILVYA). The Cytoplasmic portion of the chain corresponds to 341–353 (QELLPGRIGMVSG). A helical membrane pass occupies residues 354–374 (LFFGFAFGMGGLGAAVLGLIA). The Periplasmic portion of the chain corresponds to 375 to 378 (DHTS). The helical transmembrane segment at 379 to 399 (IELVYKICAFLPLLGMLTIFL) threads the bilayer. Residues 400–406 (PDNRHKD) lie on the Cytoplasmic side of the membrane.

It belongs to the major facilitator superfamily.

The protein localises to the cell inner membrane. In terms of biological role, confers the resistance against fosmidomycin. The sequence is that of Fosmidomycin resistance protein (fsr) from Escherichia coli (strain K12).